A 71-amino-acid polypeptide reads, in one-letter code: uncharacterized protein (71 aa).

This is an uncharacterized protein from Spiroplasma virus 4 (SpV4).